The primary structure comprises 336 residues: Homoserine dehydrogenase (336 aa).

Residue Phe-8 participates in NADPH binding. Residues Ala-10, Ile-11, and Thr-94 each coordinate NAD(+). Ile-11, Thr-94, and Lys-123 together coordinate NADPH. Residues Ile-11, Thr-94, and Lys-123 each contribute to the NADP(+) site. Na(+) contacts are provided by Glu-147, Val-150, and Gly-152. The NADP(+) site is built by Gly-205 and Glu-208. Positions 208 and 219 each coordinate L-homoserine. Lys-223 serves as the catalytic Proton donor. Gly-315 contributes to the NADPH binding site. Gly-315 serves as a coordination point for NAD(+). Gly-315 serves as a coordination point for NADP(+).

The protein belongs to the homoserine dehydrogenase family. A metal cation is required as a cofactor.

The catalysed reaction is L-homoserine + NADP(+) = L-aspartate 4-semialdehyde + NADPH + H(+). The enzyme catalyses L-homoserine + NAD(+) = L-aspartate 4-semialdehyde + NADH + H(+). It functions in the pathway amino-acid biosynthesis; L-methionine biosynthesis via de novo pathway; L-homoserine from L-aspartate: step 3/3. It participates in amino-acid biosynthesis; L-threonine biosynthesis; L-threonine from L-aspartate: step 3/5. In terms of biological role, catalyzes the conversion of L-aspartate-beta-semialdehyde (L-Asa) to L-homoserine (L-Hse), the third step in the biosynthesis of threonine and methionine from aspartate. This is Homoserine dehydrogenase (hom) from Methanocaldococcus jannaschii (strain ATCC 43067 / DSM 2661 / JAL-1 / JCM 10045 / NBRC 100440) (Methanococcus jannaschii).